A 261-amino-acid polypeptide reads, in one-letter code: Transcription factor BEE 3 (261 aa).

Over residues 72–82 (NIQNNEESSSQ) the composition is skewed to low complexity. Disordered stretches follow at residues 72 to 158 (NIQN…TDSH) and 242 to 261 (VEMGQGRDGSSVFHSSSWTL). A compositionally biased stretch (polar residues) spans 95 to 123 (VSTSENSVSDQTLSTSSAQVSINGNISTK). A compositionally biased stretch (basic and acidic residues) spans 135–146 (NREEEKEREVVH). The 51-residue stretch at 153-203 (QATDSHSIAERVRRGKINERLKCLQDIVPGCYKTMGMATMLDEIINYVQSL) folds into the bHLH domain.

Homodimer. As to expression, expressed in stems.

Its subcellular location is the nucleus. In terms of biological role, positive regulator of brassinosteroid signaling. This is Transcription factor BEE 3 (BEE3) from Arabidopsis thaliana (Mouse-ear cress).